We begin with the raw amino-acid sequence, 368 residues long: uncharacterized protein (368 aa).

Its function is as follows. Might be involved in sporulation. This is an uncharacterized protein from Brachyspira hyodysenteriae (strain ATCC 49526 / WA1).